The chain runs to 154 residues: uncharacterized protein (154 aa).

Residues 1–42 constitute a mitochondrion transit peptide; the sequence is MLRVIWKHSSRVTRSIELSNISTTNHTRSLRRLSWISPRRFY.

It is found in the mitochondrion. This is an uncharacterized protein from Saccharomyces cerevisiae (strain ATCC 204508 / S288c) (Baker's yeast).